Reading from the N-terminus, the 461-residue chain is D-phenylhydantoinase (461 aa).

Residues His59, His61, and Lys151 each coordinate a divalent metal cation. At Lys151 the chain carries N6-carboxylysine. Tyr156 lines the substrate pocket. A divalent metal cation is bound by residues His182 and His239. Ser286 serves as a coordination point for substrate. Asp313 serves as a coordination point for a divalent metal cation. Position 335 (Asn335) interacts with substrate.

This sequence belongs to the metallo-dependent hydrolases superfamily. Hydantoinase/dihydropyrimidinase family. As to quaternary structure, homotetramer. The cofactor is a divalent metal cation. Post-translationally, carboxylation allows a single lysine to coordinate two divalent metal cations.

It catalyses the reaction D-5-phenylhydantoin + H2O = N-carbamoyl-D-phenylglycine + H(+). Functionally, catalyzes the stereospecific hydrolysis of the cyclic amide bond of D-hydantoin derivatives with an aromatic side chains at the 5'-position. Has no activity on dihydropyrimidines. The physiological function is unknown. This Escherichia coli (strain SE11) protein is D-phenylhydantoinase.